The primary structure comprises 304 residues: HPr kinase/phosphorylase (304 aa).

Catalysis depends on residues histidine 136 and lysine 157. 151–158 (GESGIGKS) contributes to the ATP binding site. Serine 158 provides a ligand contact to Mg(2+). Aspartate 175 serves as the catalytic Proton acceptor; for phosphorylation activity. Proton donor; for dephosphorylation activity. An important for the catalytic mechanism of both phosphorylation and dephosphorylation region spans residues 198 to 207 (LEVRGMGIID). Glutamate 199 lines the Mg(2+) pocket. Residue arginine 240 is part of the active site. The tract at residues 261–266 (PIRPGR) is important for the catalytic mechanism of dephosphorylation.

It belongs to the HPrK/P family. Homohexamer. Mg(2+) serves as cofactor.

It catalyses the reaction [HPr protein]-L-serine + ATP = [HPr protein]-O-phospho-L-serine + ADP + H(+). The enzyme catalyses [HPr protein]-O-phospho-L-serine + phosphate + H(+) = [HPr protein]-L-serine + diphosphate. In terms of biological role, catalyzes the ATP- as well as the pyrophosphate-dependent phosphorylation of a specific serine residue in HPr, a phosphocarrier protein of the phosphoenolpyruvate-dependent sugar phosphotransferase system (PTS). HprK/P also catalyzes the pyrophosphate-producing, inorganic phosphate-dependent dephosphorylation (phosphorolysis) of seryl-phosphorylated HPr (P-Ser-HPr). The two antagonistic activities of HprK/P are regulated by several intracellular metabolites, which change their concentration in response to the absence or presence of rapidly metabolisable carbon sources (glucose, fructose, etc.) in the growth medium. Therefore, by controlling the phosphorylation state of HPr, HPrK/P is a sensor enzyme that plays a major role in the regulation of carbon metabolism and sugar transport: it mediates carbon catabolite repression (CCR), and regulates PTS-catalyzed carbohydrate uptake and inducer exclusion. The sequence is that of HPr kinase/phosphorylase from Clostridium acetobutylicum (strain ATCC 824 / DSM 792 / JCM 1419 / IAM 19013 / LMG 5710 / NBRC 13948 / NRRL B-527 / VKM B-1787 / 2291 / W).